The chain runs to 286 residues: 4-diphosphocytidyl-2-C-methyl-D-erythritol kinase (286 aa).

Residue Lys-11 is part of the active site. 94–104 (PMGGGIGGGSS) is a binding site for ATP. Residue Asp-136 is part of the active site.

It belongs to the GHMP kinase family. IspE subfamily.

The enzyme catalyses 4-CDP-2-C-methyl-D-erythritol + ATP = 4-CDP-2-C-methyl-D-erythritol 2-phosphate + ADP + H(+). Its pathway is isoprenoid biosynthesis; isopentenyl diphosphate biosynthesis via DXP pathway; isopentenyl diphosphate from 1-deoxy-D-xylulose 5-phosphate: step 3/6. Functionally, catalyzes the phosphorylation of the position 2 hydroxy group of 4-diphosphocytidyl-2C-methyl-D-erythritol. The chain is 4-diphosphocytidyl-2-C-methyl-D-erythritol kinase from Pseudomonas putida (strain W619).